The sequence spans 275 residues: Diaminopimelate epimerase (275 aa).

Residues Asn13, Gln46, and Asn66 each coordinate substrate. The Proton donor role is filled by Cys75. Substrate contacts are provided by residues 76-77 (GN), Asn159, Asn192, and 210-211 (ER). The active-site Proton acceptor is Cys219. Residue 220 to 221 (GT) participates in substrate binding.

Belongs to the diaminopimelate epimerase family. As to quaternary structure, homodimer.

The protein localises to the cytoplasm. It carries out the reaction (2S,6S)-2,6-diaminopimelate = meso-2,6-diaminopimelate. It participates in amino-acid biosynthesis; L-lysine biosynthesis via DAP pathway; DL-2,6-diaminopimelate from LL-2,6-diaminopimelate: step 1/1. In terms of biological role, catalyzes the stereoinversion of LL-2,6-diaminopimelate (L,L-DAP) to meso-diaminopimelate (meso-DAP), a precursor of L-lysine and an essential component of the bacterial peptidoglycan. In Psychromonas ingrahamii (strain DSM 17664 / CCUG 51855 / 37), this protein is Diaminopimelate epimerase.